The chain runs to 230 residues: CASP-like protein 2A2 (230 aa).

Residues 1-23 are disordered; it reads MEKKDEGNPPMAVMGSRDENEDV. Residues 1-29 are Cytoplasmic-facing; it reads MEKKDEGNPPMAVMGSRDENEDVKSTMRT. A helical membrane pass occupies residues 30–50; sequence AETMLRLVPVALCVSALVVML. Over 51-71 the chain is Extracellular; that stretch reads KNTQTNDYGSLSYSDLGAFRY. The helical transmembrane segment at 72–92 threads the bilayer; sequence LVNANGICAGYSLLSAVIVAM. The Cytoplasmic segment spans residues 93 to 100; sequence PRAWTMPQ. Residues 101–121 form a helical membrane-spanning segment; that stretch reads AWTFFLLDQVLTYVILAAGTV. Over 122–151 the chain is Extracellular; the sequence is STEVLYLANKGDTSIAWSAACASFGGFCHK. Residues 152-172 form a helical membrane-spanning segment; it reads ALISTVITFVAVIFYAALSLV. The Cytoplasmic segment spans residues 173-230; it reads SSYKLFSKYDAPVVTQSGEGIKTVTLGSPPPPPPPPPSNLHLHLHAKLACPAHNNSPN.

This sequence belongs to the Casparian strip membrane proteins (CASP) family. Homodimer and heterodimers.

It is found in the cell membrane. The protein is CASP-like protein 2A2 of Populus trichocarpa (Western balsam poplar).